A 249-amino-acid chain; its full sequence is MAMLRVQPEAQAKVDVFREDLCTKTENLLGSYFPKKISELDAFLKEPALNEANLSNLKAPLDIPVPDPVKEKEKEERKKQQEKEDKDEKKKGEDEDKGPPCGPVNCNEKIVVLLQRLKPEIKDVIEQLNLVTTWLQLQIPRIEDGNNFGVAVQEKVFELMTSLHTKLEGFHTQISKYFSERGDAVTKAAKQPHVGDYRQLVHELDEAEYRDIRLMVMEIRNAYAVLYDIILKNFEKLKKPRGETKGMIY.

The disordered stretch occupies residues 60–102 (PLDIPVPDPVKEKEKEERKKQQEKEDKDEKKKGEDEDKGPPCG). The span at 68-98 (PVKEKEKEERKKQQEKEDKDEKKKGEDEDKG) shows a compositional bias: basic and acidic residues.

The protein belongs to the PA28 family. In terms of assembly, heterodimer of PSME1 and PSME2, which forms a hexameric ring. PSME1 can form homoheptamers.

Implicated in immunoproteasome assembly and required for efficient antigen processing. The PA28 activator complex enhances the generation of class I binding peptides by altering the cleavage pattern of the proteasome. The sequence is that of Proteasome activator complex subunit 1 (PSME1) from Homo sapiens (Human).